Consider the following 367-residue polypeptide: MTVYLLAGGGTAGHVNPLLAVADELRAREPGSTILVLGTREGLESRLVPARGYELLTIARLPFPRRPNGAAVRFAPAFTRAVGQIRRMIAERGVDVVVGFGGYAAAPAYLAARRSGVPVVVHEANASPGLANRLGARVATAVGITFPGTALGPRAEVVGMPLRREIATLDRDAVRDAARAELGLDADRPTLLVTGGSTGARSLNRTVVQVAERITATGAQILHIVGGAQEFTDPGVERYHVVGYSDRMELAIAAADLVVSRAGAGALSELTAVGIPAVYVPYPVGNGEQAVNVRGVVAAGGGIVVADADFTPDWVLAHVVPLLSDPAALARMSEAAASVGTRDGAARMADLVRDAVASRPSRPAVRR.

UDP-N-acetyl-alpha-D-glucosamine-binding positions include 11 to 13 (TAG), N125, R163, S197, and Q289.

This sequence belongs to the glycosyltransferase 28 family. MurG subfamily.

It localises to the cell membrane. It carries out the reaction di-trans,octa-cis-undecaprenyl diphospho-N-acetyl-alpha-D-muramoyl-L-alanyl-D-glutamyl-meso-2,6-diaminopimeloyl-D-alanyl-D-alanine + UDP-N-acetyl-alpha-D-glucosamine = di-trans,octa-cis-undecaprenyl diphospho-[N-acetyl-alpha-D-glucosaminyl-(1-&gt;4)]-N-acetyl-alpha-D-muramoyl-L-alanyl-D-glutamyl-meso-2,6-diaminopimeloyl-D-alanyl-D-alanine + UDP + H(+). Its pathway is cell wall biogenesis; peptidoglycan biosynthesis. Cell wall formation. Catalyzes the transfer of a GlcNAc subunit on undecaprenyl-pyrophosphoryl-MurNAc-pentapeptide (lipid intermediate I) to form undecaprenyl-pyrophosphoryl-MurNAc-(pentapeptide)GlcNAc (lipid intermediate II). In Clavibacter sepedonicus (Clavibacter michiganensis subsp. sepedonicus), this protein is UDP-N-acetylglucosamine--N-acetylmuramyl-(pentapeptide) pyrophosphoryl-undecaprenol N-acetylglucosamine transferase.